The sequence spans 901 residues: Translation initiation factor IF-2 (901 aa).

The segment at 48 to 313 (HLNREHGGSS…SSLQQGFTKP (266 aa)) is disordered. The span at 68–82 (STLSVPGTGGKSKSV) shows a compositional bias: polar residues. A compositionally biased stretch (basic and acidic residues) spans 106–226 (ALAKREAEEQ…RMAEANEGKW (121 aa)). Basic residues predominate over residues 263–277 (ARGRGGKAAKQKKGS). Residues 278–291 (KLSESKADREEARA) are compositionally biased toward basic and acidic residues. One can recognise a tr-type G domain in the interval 400-569 (PRAPVVTIMG…LLQAEVLELK (170 aa)). Residues 409–416 (GHVDHGKT) are G1. 409-416 (GHVDHGKT) provides a ligand contact to GTP. The interval 434-438 (GITQH) is G2. Residues 455–458 (DTPG) are G3. Residues 455-459 (DTPGH) and 509-512 (NKID) each bind GTP. Residues 509 to 512 (NKID) form a G4 region. The tract at residues 545–547 (SAK) is G5.

Belongs to the TRAFAC class translation factor GTPase superfamily. Classic translation factor GTPase family. IF-2 subfamily.

The protein localises to the cytoplasm. Its function is as follows. One of the essential components for the initiation of protein synthesis. Protects formylmethionyl-tRNA from spontaneous hydrolysis and promotes its binding to the 30S ribosomal subunits. Also involved in the hydrolysis of GTP during the formation of the 70S ribosomal complex. This Edwardsiella ictaluri (strain 93-146) protein is Translation initiation factor IF-2.